Consider the following 514-residue polypeptide: Na(+)/H(+) antiporter NhaB (514 aa).

12 consecutive transmembrane segments (helical) span residues 23 to 43 (LALLVFLIVNPFIFLANPFIA), 63 to 83 (PLLPGGLLAIEAVIIGMTSAA), 97 to 117 (LLLMFMVAGIYFMKQLLLFIF), 120 to 140 (LLLSIRSKMVLSLAFCVAAAF), 144 to 164 (FLDALTVVAVVISVAVGFYGI), 202 to 222 (LMMHAGVGTALGGVMTMVGEP), 238 to 258 (FFLRMSPVTVPVLVCGLLTCM), 303 to 323 (AIIGVWLVTALALHLAEVGLI), 357 to 377 (LTVFFSIVAVIIDQHLFAPII), 391 to 411 (LFYLFNGLLSSISDNVFVGTI), 447 to 467 (ATPNGQAAFLFLLTSALAPLI), and 475 to 495 (VWMALPYTIVLTLIGLLCVEF).

The protein belongs to the NhaB Na(+)/H(+) (TC 2.A.34) antiporter family.

It localises to the cell inner membrane. It catalyses the reaction 2 Na(+)(in) + 3 H(+)(out) = 2 Na(+)(out) + 3 H(+)(in). Na(+)/H(+) antiporter that extrudes sodium in exchange for external protons. The sequence is that of Na(+)/H(+) antiporter NhaB from Salmonella heidelberg (strain SL476).